The chain runs to 477 residues: Tripartite motif-containing protein 72 (477 aa).

16 residues coordinate Zn(2+): Cys14, Cys17, Cys29, His31, Cys34, Cys37, Cys53, Cys56, Cys86, His89, Cys97, Asp100, Cys105, Cys108, His114, and His117. The RING-type zinc finger occupies 14-57 (CPLCLQLFDAPVTAECGHSFCRACLGRVAGEPAADGTVLCPCCQ). The B box-type zinc finger occupies 81–122 (VPQGHCEEHLDPLSIYCEQDRALVCGVCASLGSHRGHRLLPA). Residues 135-232 (QQKLQLQEAC…EKVLEEVADK (98 aa)) are a coiled coil. S-nitrosocysteine is present on Cys144. The residue at position 255 (Ser255) is a Phosphoserine. In terms of domain architecture, B30.2/SPRY spans 271–475 (DFKFQVWRKM…PLLLVGPEGA (205 aa)).

The protein belongs to the TRIM/RBCC family. In terms of assembly, homodimer. Homooligomer; disulfide-linked. Oligomerizes on the phospholipid membrane. Interacts with DYSF and CAV3. Disulfide bond formation at Cys-242 occurs in case of membrane damage that cause the entry of the oxidized milieu of the extracellular space, resulting in homooligomerization. Post-translationally, S-nitrosylation at Cys-144 stabilizes TRIM72 and protects against oxidation-induced protein degradation and cell death.

The protein resides in the cell membrane. Its subcellular location is the sarcolemma. It is found in the cytoplasmic vesicle membrane. It carries out the reaction S-ubiquitinyl-[E2 ubiquitin-conjugating enzyme]-L-cysteine + [acceptor protein]-L-lysine = [E2 ubiquitin-conjugating enzyme]-L-cysteine + N(6)-ubiquitinyl-[acceptor protein]-L-lysine.. It participates in protein modification; protein ubiquitination. With respect to regulation, specifically binds phosphatidylserine. The binding to phospholipids enhances ubiquitination activity. Muscle-specific E3 ubiquitin-protein ligase that plays a central role in cell membrane repair by nucleating the assembly of the repair machinery at injury sites. Its ubiquitination activity is mediated by E2 ubiquitin-conjugating enzymes UBE2D1, UBE2D2 and UBE2D3. Acts as a sensor of oxidation: upon membrane damage, entry of extracellular oxidative environment results in disulfide bond formation and homooligomerization at the injury site. This oligomerization acts as a nucleation site for recruitment of TRIM72-containing vesicles to the injury site, leading to membrane patch formation. Probably acts upstream of the Ca(2+)-dependent membrane resealing process. Required for transport of DYSF to sites of cell injury during repair patch formation. Regulates membrane budding and exocytosis. May be involved in the regulation of the mobility of KCNB1-containing endocytic vesicles. In Homo sapiens (Human), this protein is Tripartite motif-containing protein 72.